We begin with the raw amino-acid sequence, 282 residues long: Putative hydrolase Bcep18194_B0137 (282 aa).

Glu-124, Glu-126, and Asp-155 together coordinate Mg(2+).

Belongs to the FAH family. Mg(2+) serves as cofactor.

The chain is Putative hydrolase Bcep18194_B0137 from Burkholderia lata (strain ATCC 17760 / DSM 23089 / LMG 22485 / NCIMB 9086 / R18194 / 383).